Reading from the N-terminus, the 216-residue chain is Ras-related protein RABE1d (216 aa).

A GTP-binding site is contributed by Gly-22–Ser-29. The Effector region motif lies at Phe-44–Phe-52. Residues Asp-70–Gln-74, Asn-128–Asp-131, and Ser-159–Ala-160 each bind GTP. The tract at residues Thr-196–Val-216 is disordered. The segment covering Thr-200–Val-216 has biased composition (low complexity). S-geranylgeranyl cysteine attachment occurs at residues Cys-212 and Cys-213.

The protein belongs to the small GTPase superfamily. Rab family. As to quaternary structure, interacts with PI5K2.

Its subcellular location is the golgi apparatus membrane. It is found in the cell membrane. Functionally, involved in membrane trafficking from the Golgi to the plasma membrane. This Arabidopsis thaliana (Mouse-ear cress) protein is Ras-related protein RABE1d (RABE1D).